We begin with the raw amino-acid sequence, 226 residues long: PKHD-type hydroxylase PST_0995 (226 aa).

The Fe2OG dioxygenase domain occupies 78 to 178 (KVFPPLFNCY…RLASFFWIQS (101 aa)). Positions 96, 98, and 159 each coordinate Fe cation. 2-oxoglutarate is bound at residue arginine 169.

Fe(2+) serves as cofactor. It depends on L-ascorbate as a cofactor.

The sequence is that of PKHD-type hydroxylase PST_0995 from Stutzerimonas stutzeri (strain A1501) (Pseudomonas stutzeri).